The following is a 472-amino-acid chain: Proline--tRNA ligase (472 aa).

Belongs to the class-II aminoacyl-tRNA synthetase family. ProS type 3 subfamily. Homodimer.

It is found in the cytoplasm. It catalyses the reaction tRNA(Pro) + L-proline + ATP = L-prolyl-tRNA(Pro) + AMP + diphosphate. Functionally, catalyzes the attachment of proline to tRNA(Pro) in a two-step reaction: proline is first activated by ATP to form Pro-AMP and then transferred to the acceptor end of tRNA(Pro). This Ureaplasma urealyticum serovar 10 (strain ATCC 33699 / Western) protein is Proline--tRNA ligase.